The primary structure comprises 759 residues: LPS-assembly protein LptD (759 aa).

Residues 1–45 (MKPLKLELNPRDFNHYQAAFLPYRMKIKQPLHVLCFSVCSLSAVA) form the signal peptide.

This sequence belongs to the LptD family. In terms of assembly, component of the lipopolysaccharide transport and assembly complex. Interacts with LptE and LptA.

It is found in the cell outer membrane. Its function is as follows. Together with LptE, is involved in the assembly of lipopolysaccharide (LPS) at the surface of the outer membrane. The polypeptide is LPS-assembly protein LptD (Pseudoalteromonas atlantica (strain T6c / ATCC BAA-1087)).